The primary structure comprises 28 residues: Kappa-buthitoxin-Tt2b (28 aa).

3 disulfide bridges follow: Cys-2–Cys-24, Cys-7–Cys-20, and Cys-11–Cys-26.

As to expression, expressed by the venom gland.

Its subcellular location is the secreted. Functionally, blocks potassium channels Shaker-IR (with inactivation domain removed) and hKv1.2/KCNA2. This chain is Kappa-buthitoxin-Tt2b, found in Tityus trivittatus (Argentinean scorpion).